Consider the following 158-residue polypeptide: Cytochrome c-type biogenesis protein CcmE (158 aa).

Over M1 to R8 the chain is Cytoplasmic. A helical; Signal-anchor for type II membrane protein transmembrane segment spans residues L9 to A29. At L30–R158 the chain is on the periplasmic side. 2 residues coordinate heme: H123 and Y127. Residues A139 to R158 are disordered.

The protein belongs to the CcmE/CycJ family.

It localises to the cell inner membrane. Its function is as follows. Heme chaperone required for the biogenesis of c-type cytochromes. Transiently binds heme delivered by CcmC and transfers the heme to apo-cytochromes in a process facilitated by CcmF and CcmH. The protein is Cytochrome c-type biogenesis protein CcmE of Maricaulis maris (strain MCS10) (Caulobacter maris).